A 198-amino-acid polypeptide reads, in one-letter code: MKITNPKLIISAVSKKQYPAGNLSEIAFVGRSNVGKSSLINTLIERNGLAHTSGQPGKTQTLNFYNLDEKLFFVDVPGYGYAKVSKAQREQFGSMVEEYLSSRDQLKGVISLIDARHEPTEDDKLMYNWLEYYQVPILIVATKADKVASGKFNAVESQIKKTLKFNSTTSSLILFSAIKKFGAKEIWNWIKGQAELQE.

One can recognise an EngB-type G domain in the interval 22–196 (NLSEIAFVGR…WNWIKGQAEL (175 aa)). Residues 30-37 (GRSNVGKS), 57-61 (GKTQT), 75-78 (DVPG), 142-145 (TKAD), and 175-177 (FSA) contribute to the GTP site. Positions 37 and 59 each coordinate Mg(2+).

It belongs to the TRAFAC class TrmE-Era-EngA-EngB-Septin-like GTPase superfamily. EngB GTPase family. It depends on Mg(2+) as a cofactor.

Its function is as follows. Necessary for normal cell division and for the maintenance of normal septation. This is Probable GTP-binding protein EngB from Oenococcus oeni (strain ATCC BAA-331 / PSU-1).